We begin with the raw amino-acid sequence, 556 residues long: Formate--tetrahydrofolate ligase (556 aa).

65-72 (TPAGEGKT) serves as a coordination point for ATP.

It belongs to the formate--tetrahydrofolate ligase family.

The catalysed reaction is (6S)-5,6,7,8-tetrahydrofolate + formate + ATP = (6R)-10-formyltetrahydrofolate + ADP + phosphate. It participates in one-carbon metabolism; tetrahydrofolate interconversion. The polypeptide is Formate--tetrahydrofolate ligase (Alkaliphilus oremlandii (strain OhILAs) (Clostridium oremlandii (strain OhILAs))).